A 151-amino-acid polypeptide reads, in one-letter code: 3-dehydroquinate dehydratase (151 aa).

The active-site Proton acceptor is Tyr26. The substrate site is built by Asn75, His81, and Asp88. Residue His101 is the Proton donor of the active site. Residues 102-103 (LS) and Arg112 each bind substrate.

This sequence belongs to the type-II 3-dehydroquinase family. In terms of assembly, homododecamer.

It catalyses the reaction 3-dehydroquinate = 3-dehydroshikimate + H2O. It functions in the pathway metabolic intermediate biosynthesis; chorismate biosynthesis; chorismate from D-erythrose 4-phosphate and phosphoenolpyruvate: step 3/7. In terms of biological role, catalyzes a trans-dehydration via an enolate intermediate. This Shewanella denitrificans (strain OS217 / ATCC BAA-1090 / DSM 15013) protein is 3-dehydroquinate dehydratase.